The following is a 218-amino-acid chain: Sodium channel regulatory subunit beta-1 (218 aa).

Residues 1–18 (MGTLLALVVGAVLVSSAW) form the signal peptide. Residues 19-157 (GGCVEVDSET…DKANRDMASI (139 aa)) lie on the Extracellular side of the membrane. Intrachain disulfides connect cysteine 21–cysteine 43 and cysteine 40–cysteine 121. In terms of domain architecture, Ig-like C2-type spans 22–150 (VEVDSETEAV…KIHLEVVDKA (129 aa)). N-linked (GlcNAc...) asparagine glycans are attached at residues asparagine 93, asparagine 110, asparagine 114, and asparagine 135. Residues 158–179 (VSEIMMYVLIVVLTIWLVAEMV) form a helical membrane-spanning segment. Residues 180-218 (YCYKKIAAATEAAAQENASEYLAITSESKENCTGVQVAE) lie on the Cytoplasmic side of the membrane.

It belongs to the sodium channel auxiliary subunit SCN1B (TC 8.A.17) family. A voltage-gated sodium (Nav) channel consists of an ion-conducting pore-forming alpha subunit functional on its own that is regulated by one or more beta subunits. Interacts with SCN1A; regulatory subunit of SCN1A/Nav1.1. Interacts with SCN3A; regulatory subunit of SCN3A/Nav1.3. Interacts with SCN4A; regulatory subunit of SCN4A/Nav1.4. Interacts with SCN5A; regulatory subunit of SCN5A/Nav1.5. Interacts with SCN8A; regulatory subunit of SCN8A/Nav1.6. Interacts with SCN9A; regulatory subunit of SCN9A/Nav1.7. Interacts with SCN10A; regulatory subunit of SCN10A/Nav1.8. Interacts with NFASC. Interacts with TMEM65. As to expression, detected in brain (at protein level). Expressed in brain, heart, skeletal muscle and spinal cord.

Its subcellular location is the cell membrane. The protein resides in the perikaryon. The protein localises to the cell projection. It is found in the axon. Its function is as follows. Regulatory subunit of multiple voltage-gated sodium (Nav) channels directly mediating the depolarization of excitable membranes. Navs, also called VGSCs (voltage-gated sodium channels) or VDSCs (voltage-dependent sodium channels), operate by switching between closed and open conformations depending on the voltage difference across the membrane. In the open conformation they allow Na(+) ions to selectively pass through the pore, along their electrochemical gradient. The influx of Na+ ions provokes membrane depolarization, initiating the propagation of electrical signals throughout cells and tissues. The accessory beta subunits participate in localization and functional modulation of the Nav channels. Modulates the activity of SCN1A/Nav1.1, SCN2A/Nav1.2, SCN3A/Nav1.3, SCN4A/Nav1.4, SCN5A/Nav1.5, SCN8A/Nav1.6, SCN9A/Nav1.7 and SCN10A/Nav1.8. The sequence is that of Sodium channel regulatory subunit beta-1 from Rattus norvegicus (Rat).